The chain runs to 412 residues: MRDFIKHLKDRGILEDFSHGLDSVESPISAYLGFDPTAASLHIGHWIGICFLRRMASFGITPVALVGSATGMIGDPSGKSIERTLLESNEVAHNSKKLSECLSHYLPGVQIVNNMEWFQGTTVIDFLRDVGKHFRLGTMLGKDTIKQRIQSEEGISYTEFSYILLQSYDFAHLFEKHGIALQCGGSDQWGNITSGIDYIRRKGLGQAYGLTYPLLTNSQGKKIGKTESGTIWLDPTLTSPYELYQYFLRLPDAEVPKIARTLTLLSNEEIFDLDKKFLSDPIAVKKFVTETIVTSIHGEDGLKKAQMVTQSMHPGKVSSISEKDFQDLISMGQGISLDRVQTLGKRWIDLFVGVGFCNSKGEARRLIEQKGLYVNSEPIADEHSVFEERQVCYDQYVLLAQGKKKKLVLHLI.

Tyr31 lines the L-tyrosine pocket. The 'HIGH' region motif lies at Pro36–His45. L-tyrosine contacts are provided by Tyr162 and Gln166. Residues Lys222–Thr226 carry the 'KMSKS' region motif. Residue Lys225 participates in ATP binding. Positions Lys345–Ile412 constitute an S4 RNA-binding domain.

It belongs to the class-I aminoacyl-tRNA synthetase family. TyrS type 1 subfamily. In terms of assembly, homodimer.

The protein localises to the cytoplasm. It carries out the reaction tRNA(Tyr) + L-tyrosine + ATP = L-tyrosyl-tRNA(Tyr) + AMP + diphosphate + H(+). Its function is as follows. Catalyzes the attachment of tyrosine to tRNA(Tyr) in a two-step reaction: tyrosine is first activated by ATP to form Tyr-AMP and then transferred to the acceptor end of tRNA(Tyr). The protein is Tyrosine--tRNA ligase of Chlamydia caviae (strain ATCC VR-813 / DSM 19441 / 03DC25 / GPIC) (Chlamydophila caviae).